Consider the following 91-residue polypeptide: Small ribosomal subunit protein uS15c (91 aa).

Belongs to the universal ribosomal protein uS15 family. Part of the 30S ribosomal subunit.

Its subcellular location is the plastid. The protein localises to the chloroplast. This chain is Small ribosomal subunit protein uS15c (rps15), found in Cicer arietinum (Chickpea).